We begin with the raw amino-acid sequence, 306 residues long: tRNA dimethylallyltransferase (306 aa).

12–19 (GPTGTKKS) is an ATP binding site.

This sequence belongs to the IPP transferase family. In terms of assembly, monomer. Requires Mg(2+) as cofactor.

It catalyses the reaction adenosine(37) in tRNA + dimethylallyl diphosphate = N(6)-dimethylallyladenosine(37) in tRNA + diphosphate. In terms of biological role, catalyzes the transfer of a dimethylallyl group onto the adenine at position 37 in tRNAs that read codons beginning with uridine, leading to the formation of N6-(dimethylallyl)adenosine (i(6)A). The protein is tRNA dimethylallyltransferase of Mycoplasmoides gallisepticum (strain R(low / passage 15 / clone 2)) (Mycoplasma gallisepticum).